The sequence spans 74 residues: Anionic peptide clone 9 (74 aa).

A signal peptide spans 1–24 (MVSKSLIVLLLVSVLVSTFFTTEA).

Belongs to the non-disulfide-bridged peptide (NDBP) superfamily. Long chain multifunctional peptide (group 2) family. In terms of tissue distribution, expressed by the venom gland.

The protein resides in the secreted. Functionally, may be an antimicrobial peptide. The protein is Anionic peptide clone 9 of Tityus costatus (Brazilian scorpion).